A 499-amino-acid chain; its full sequence is Importin subunit alpha-8 (499 aa).

The 57-residue stretch at 1–57 (MATSKAPKERLKNYKYRGKEMSLPRQQRIASSLQLRKTRKDEQVLKRRNIDLFSSDM) folds into the IBB domain. 8 ARM repeats span residues 101–141 (TPPL…NIAS), 144–183 (SEQT…NIAG), 186–226 (AEFR…NLCR), 229–268 (DPYP…YLTK), 271–310 (KEYI…NIVA), 313–352 (DEQT…NVAA), 354–393 (PRHQ…NIAT), and 397–436 (QDQL…YLLQ).

The protein belongs to the importin alpha family. Binds to importin subunit beta-1/KPNB1 via the IBB domain; this complex dissociates in the presence of RAN-GTP. Shows a limited binding to the RB1 nuclear localization signal (NLS), but not to the SV40, nor NPM1 NLSs. Interacts with RSL1D1. Expressed predominantly in ovary. Isoform 1 is the predominant form.

Its subcellular location is the nucleus. Its function is as follows. Functions in nuclear protein import. The sequence is that of Importin subunit alpha-8 (Kpna7) from Mus musculus (Mouse).